The primary structure comprises 231 residues: Lactate utilization protein C (231 aa).

The protein belongs to the LutC/YkgG family.

Is involved in L-lactate degradation and allows cells to grow with lactate as the sole carbon source. This is Lactate utilization protein C from Macrococcus caseolyticus (strain JCSC5402) (Macrococcoides caseolyticum).